We begin with the raw amino-acid sequence, 1958 residues long: MLQDESSRSLPRSALIRRRLSLFLQSHALMYSFLWSESAKKSLLNEVFSALLGYDHTLWNTLLPERPTIDASFLLRRAQGHSEGDEYRHGTCESKCGHIFRKGEVFYRCKTCSVDSNSALCVKCFRATSHKDHETSFTVSAGSGGCCDCGNAAAWIGDVSCKIHSHEEDATISNDMIDEIPEKLENSIQTTIDCVLDFVLDVFSCSPENLKKMPTLESILQDEKTSRLSENKYGDIDDSCNMYSLVLWNDEKHSFKQFYEQITTALELPNNVFGKKMANIINDIGRACIVTETNIKELLKIGQKLAQINLAVSIRSMRDIFREESCAVLLEWLADIAGSSICGKRNYFSSVICKELVRPWNCGLHNSDLTFRLSLRSLALPEIVAIDSPDIFLNEDHINSSGPSDTSSHMLETDESSIHSRHWYPSNSLPDVLSYASRVRFDYFFLYDLKLWKSLRYKLQELYLGYFITQPGFKEIMGARIAISYRRLAELFLLLDREPEHSVIFFSMQIFTVADVAKLLVTEYDFLTTINATLYTFFTYKKLNTPNYVDQHAMIRTDSAAFHSRRYIHIFHHIQFMLSIPCVAEIVREDLKFLKQYADFFNLFQGMCPYTRAVSQHVEWENDSWMYVLNVSLQVAKLCRHVGNVFMELNTNKLANAINYLISLILYPKARNESWTNTESLTTGITVDERGNSKLIEYDIALQPVSFHHPLHWLLVYLLSFYVERDNYKLLWTQLDLLAVTDHPLRVCAWLSQMRAKLWIRNGTTLRDQAHHYRNLSFHEYTFDLDVLLLQLTLTYGDPDAILPSFISRFQLEDQMYGRFFVPHKHYDVSQVTIMMEEFLLLLISIVCNTAVLDHWDITRRIEYGIAHILCFRPLPYSEITKRTCEHLLEHKQFESTLKKVATFRNAEGINDSGSFTLKDEYFDYVDPFNIHYSRNQREEAENILRRRYSKQHSKHLESVVYEEYHPILHSNITIPILQSDSFVGILWHTIVYAYIYPYDQGKLEGLVNTALHACLLVLMSEKGSEPIFSKKICENRFPVVEGLQEYCNSPDVTLFSVLCQMKNHRNFVYVKEKISLIMKILKSEVPLLYEPVYAETLSISSSKIVQSLSDAEQQEQHLAKVRMAKERQARIMEQFRMQQNKFLENHALFEASDCEMDEADEFSVTSSVSTKLFLDPPIDTCLLCQEELKDKRPYGTLVFVLRSSVLRLFPADDANYVSEVLDIPDSLDHEIQERPFGLAGKRKKVLDSTEAYDYDNYYYEKKGNELHQLKDSFNGFPPDQLDRGLHATGCGHFMHIDCFKNHIATVTLATRANPYRNHPHNLSMKEFLCPLCKALCNTIFPILWRPKEEINFQEAGVLTAPLKNWLVSKTFSFNKDLNQQLLDIETSPSEHTQSYNLNLLDVLQHTLRDSLKDIYTLNTGADNSSDNVEENADNLFQSSVLDHVHFKSVVNNEVPADERLAISDDIFELYRRLDDVIDLNSSLYSDDFIPVNGKLHNVVKLFSYSLCQVEASTRGHIKCSSIPADIWVHNLGKNQQVFLRILSESIKTYTLLCAHDSQKRIGGSIQEFEFISFCQQKRIFGRLLPSLDSPVTKSITDDRVEPLLVKDTFREFAEASVSGLLSCDESFHYLTQLYYTADIVRNLWILLSQRNSLLKCMESVEFEAFDYEQLKGFEHLVIQIWKSLRVDGAGLINFDCCTEDDLNNPHLLFTLYKLLERFSLIFLRKCALLWYCRYGVSFETQPNLNFQNSELSRLQTKMHIPGVIELSNHLCLTASSTEWSLIKHWCNFFTETGPLCDFPRAYYPGIYELVSLPYELDKVFELLLARRCSKCLTEPMEPAICLFCGKLLCFQSHCCSFNGIGECNLHMQQCASDIGIFLIVKKCAILYLNPPVGSFSVAPFLDAYGETDLGLRRGRSQYLSQKRYDETVRTMWLNGSIPSYIARQLDANPDTGGWETL.

A UBR-type zinc finger spans residues 94-166; sequence SKCGHIFRKG…GDVSCKIHSH (73 aa). The RING-type; atypical zinc finger occupies 1182-1334; that stretch reads CLLCQEELKD…MKEFLCPLCK (153 aa).

This sequence belongs to the E3 ubiquitin-protein ligase UBR1-like family.

The catalysed reaction is S-ubiquitinyl-[E2 ubiquitin-conjugating enzyme]-L-cysteine + [acceptor protein]-L-lysine = [E2 ubiquitin-conjugating enzyme]-L-cysteine + N(6)-ubiquitinyl-[acceptor protein]-L-lysine.. It participates in protein modification; protein ubiquitination. Its function is as follows. Ubiquitin ligase protein which is a component of the N-end rule pathway. Recognizes and binds to proteins bearing specific N-terminal residues that are destabilizing according to the N-end rule, leading to their ubiquitination and subsequent degradation. This chain is E3 ubiquitin-protein ligase ubr1 (ubr1), found in Schizosaccharomyces pombe (strain 972 / ATCC 24843) (Fission yeast).